The following is a 112-amino-acid chain: PTS system lactose-specific EIIA component (112 aa).

The PTS EIIA type-3 domain occupies 6-104; that stretch reads EEISMVGFAL…TRYMIRMFKR (99 aa). The active-site Tele-phosphohistidine intermediate is the His80. Position 80 is a phosphohistidine; by HPr (His80). Asp83 provides a ligand contact to Mg(2+).

As to quaternary structure, homotrimer. The cofactor is Mg(2+).

Its subcellular location is the cytoplasm. Functionally, the phosphoenolpyruvate-dependent sugar phosphotransferase system (sugar PTS), a major carbohydrate active transport system, catalyzes the phosphorylation of incoming sugar substrates concomitantly with their translocation across the cell membrane. The enzyme II LacEF PTS system is involved in lactose transport. In Lacticaseibacillus casei (Lactobacillus casei), this protein is PTS system lactose-specific EIIA component.